The following is a 351-amino-acid chain: Uroporphyrinogen decarboxylase (351 aa).

Residues Arg25–Arg29, Asp74, Tyr151, Ser206, and His325 each bind substrate.

Belongs to the uroporphyrinogen decarboxylase family. As to quaternary structure, homodimer.

The protein resides in the cytoplasm. The catalysed reaction is uroporphyrinogen III + 4 H(+) = coproporphyrinogen III + 4 CO2. It participates in porphyrin-containing compound metabolism; protoporphyrin-IX biosynthesis; coproporphyrinogen-III from 5-aminolevulinate: step 4/4. In terms of biological role, catalyzes the decarboxylation of four acetate groups of uroporphyrinogen-III to yield coproporphyrinogen-III. This Prosthecochloris aestuarii (strain DSM 271 / SK 413) protein is Uroporphyrinogen decarboxylase.